A 169-amino-acid chain; its full sequence is ATP synthase subunit b (169 aa).

A helical membrane pass occupies residues 14 to 34 (TFLAMLISFLILVFILQQVAF).

It belongs to the ATPase B chain family. As to quaternary structure, F-type ATPases have 2 components, F(1) - the catalytic core - and F(0) - the membrane proton channel. F(1) has five subunits: alpha(3), beta(3), gamma(1), delta(1), epsilon(1). F(0) has four main subunits: a(1), b(2) and c(10-14). The alpha and beta chains form an alternating ring which encloses part of the gamma chain. F(1) is attached to F(0) by a central stalk formed by the gamma and epsilon chains, while a peripheral stalk is formed by the delta and b chains.

Its subcellular location is the cell membrane. In terms of biological role, f(1)F(0) ATP synthase produces ATP from ADP in the presence of a proton or sodium gradient. F-type ATPases consist of two structural domains, F(1) containing the extramembraneous catalytic core and F(0) containing the membrane proton channel, linked together by a central stalk and a peripheral stalk. During catalysis, ATP synthesis in the catalytic domain of F(1) is coupled via a rotary mechanism of the central stalk subunits to proton translocation. Its function is as follows. Component of the F(0) channel, it forms part of the peripheral stalk, linking F(1) to F(0). The polypeptide is ATP synthase subunit b (Heliobacterium modesticaldum (strain ATCC 51547 / Ice1)).